Reading from the N-terminus, the 221-residue chain is Iron-sulfur cluster repair protein YtfE (221 aa).

It belongs to the RIC family. YtfE subfamily. Homodimer.

It is found in the cytoplasm. In terms of biological role, di-iron-containing protein involved in the repair of iron-sulfur clusters damaged by oxidative and nitrosative stress conditions. This is Iron-sulfur cluster repair protein YtfE from Yersinia pseudotuberculosis serotype IB (strain PB1/+).